The chain runs to 213 residues: Methylthioribulose-1-phosphate dehydratase (213 aa).

2 residues coordinate Zn(2+): His-104 and His-106.

It belongs to the aldolase class II family. MtnB subfamily. Zn(2+) is required as a cofactor.

The enzyme catalyses 5-(methylsulfanyl)-D-ribulose 1-phosphate = 5-methylsulfanyl-2,3-dioxopentyl phosphate + H2O. It functions in the pathway amino-acid biosynthesis; L-methionine biosynthesis via salvage pathway; L-methionine from S-methyl-5-thio-alpha-D-ribose 1-phosphate: step 2/6. Its function is as follows. Catalyzes the dehydration of methylthioribulose-1-phosphate (MTRu-1-P) into 2,3-diketo-5-methylthiopentyl-1-phosphate (DK-MTP-1-P). The sequence is that of Methylthioribulose-1-phosphate dehydratase from Stenotrophomonas maltophilia (strain K279a).